We begin with the raw amino-acid sequence, 217 residues long: Ribose-5-phosphate isomerase A (217 aa).

Substrate-binding positions include 28–31, 81–84, and 94–97; these read TGST, DGAD, and KGGG. The Proton acceptor role is filled by E103. K121 contacts substrate.

This sequence belongs to the ribose 5-phosphate isomerase family. Homodimer.

The enzyme catalyses aldehydo-D-ribose 5-phosphate = D-ribulose 5-phosphate. It participates in carbohydrate degradation; pentose phosphate pathway; D-ribose 5-phosphate from D-ribulose 5-phosphate (non-oxidative stage): step 1/1. In terms of biological role, catalyzes the reversible conversion of ribose-5-phosphate to ribulose 5-phosphate. The protein is Ribose-5-phosphate isomerase A of Aeromonas salmonicida (strain A449).